A 379-amino-acid chain; its full sequence is Chaperone protein DnaJ (379 aa).

One can recognise a J domain in the interval 5–70; that stretch reads DYYETLGCDR…QKRAAYDRFG (66 aa). The CR-type zinc finger occupies 134 to 212; the sequence is GKTAQIKIPT…CGGAGRVTRE (79 aa). Residues Cys147, Cys150, Cys164, Cys167, Cys186, Cys189, Cys200, and Cys203 each contribute to the Zn(2+) site. 4 CXXCXGXG motif repeats span residues 147–154, 164–171, 186–193, and 200–207; these read CETCSGTG, CRMCGGAG, CPNCQGRG, and CSDCGGAG.

Belongs to the DnaJ family. In terms of assembly, homodimer. Zn(2+) serves as cofactor.

It is found in the cytoplasm. In terms of biological role, participates actively in the response to hyperosmotic and heat shock by preventing the aggregation of stress-denatured proteins and by disaggregating proteins, also in an autonomous, DnaK-independent fashion. Unfolded proteins bind initially to DnaJ; upon interaction with the DnaJ-bound protein, DnaK hydrolyzes its bound ATP, resulting in the formation of a stable complex. GrpE releases ADP from DnaK; ATP binding to DnaK triggers the release of the substrate protein, thus completing the reaction cycle. Several rounds of ATP-dependent interactions between DnaJ, DnaK and GrpE are required for fully efficient folding. Also involved, together with DnaK and GrpE, in the DNA replication of plasmids through activation of initiation proteins. The chain is Chaperone protein DnaJ from Xanthobacter autotrophicus (strain ATCC BAA-1158 / Py2).